The following is a 940-amino-acid chain: Isoleucine--tRNA ligase (940 aa).

A 'HIGH' region motif is present at residues 58–68 (PYANGSIHIGH). Residue Glu-564 coordinates L-isoleucyl-5'-AMP. Positions 605–609 (KMSKS) match the 'KMSKS' region motif. Residue Lys-608 participates in ATP binding. The Zn(2+) site is built by Cys-903, Cys-906, Cys-923, and Cys-926.

The protein belongs to the class-I aminoacyl-tRNA synthetase family. IleS type 1 subfamily. As to quaternary structure, monomer. It depends on Zn(2+) as a cofactor.

It is found in the cytoplasm. It catalyses the reaction tRNA(Ile) + L-isoleucine + ATP = L-isoleucyl-tRNA(Ile) + AMP + diphosphate. Its function is as follows. Catalyzes the attachment of isoleucine to tRNA(Ile). As IleRS can inadvertently accommodate and process structurally similar amino acids such as valine, to avoid such errors it has two additional distinct tRNA(Ile)-dependent editing activities. One activity is designated as 'pretransfer' editing and involves the hydrolysis of activated Val-AMP. The other activity is designated 'posttransfer' editing and involves deacylation of mischarged Val-tRNA(Ile). The polypeptide is Isoleucine--tRNA ligase (Shewanella oneidensis (strain ATCC 700550 / JCM 31522 / CIP 106686 / LMG 19005 / NCIMB 14063 / MR-1)).